The primary structure comprises 315 residues: 4-hydroxy-3-methylbut-2-enyl diphosphate reductase (315 aa).

C12 contributes to the [4Fe-4S] cluster binding site. Residues H41 and H74 each contribute to the (2E)-4-hydroxy-3-methylbut-2-enyl diphosphate site. Dimethylallyl diphosphate contacts are provided by H41 and H74. Isopentenyl diphosphate-binding residues include H41 and H74. C96 provides a ligand contact to [4Fe-4S] cluster. Position 124 (H124) interacts with (2E)-4-hydroxy-3-methylbut-2-enyl diphosphate. Position 124 (H124) interacts with dimethylallyl diphosphate. H124 is a binding site for isopentenyl diphosphate. Residue E126 is the Proton donor of the active site. T168 serves as a coordination point for (2E)-4-hydroxy-3-methylbut-2-enyl diphosphate. C198 contributes to the [4Fe-4S] cluster binding site. Residues S226, S227, N228, and S270 each coordinate (2E)-4-hydroxy-3-methylbut-2-enyl diphosphate. Dimethylallyl diphosphate contacts are provided by S226, S227, N228, and S270. Positions 226, 227, 228, and 270 each coordinate isopentenyl diphosphate.

It belongs to the IspH family. Requires [4Fe-4S] cluster as cofactor.

The enzyme catalyses isopentenyl diphosphate + 2 oxidized [2Fe-2S]-[ferredoxin] + H2O = (2E)-4-hydroxy-3-methylbut-2-enyl diphosphate + 2 reduced [2Fe-2S]-[ferredoxin] + 2 H(+). The catalysed reaction is dimethylallyl diphosphate + 2 oxidized [2Fe-2S]-[ferredoxin] + H2O = (2E)-4-hydroxy-3-methylbut-2-enyl diphosphate + 2 reduced [2Fe-2S]-[ferredoxin] + 2 H(+). It participates in isoprenoid biosynthesis; dimethylallyl diphosphate biosynthesis; dimethylallyl diphosphate from (2E)-4-hydroxy-3-methylbutenyl diphosphate: step 1/1. It functions in the pathway isoprenoid biosynthesis; isopentenyl diphosphate biosynthesis via DXP pathway; isopentenyl diphosphate from 1-deoxy-D-xylulose 5-phosphate: step 6/6. In terms of biological role, catalyzes the conversion of 1-hydroxy-2-methyl-2-(E)-butenyl 4-diphosphate (HMBPP) into a mixture of isopentenyl diphosphate (IPP) and dimethylallyl diphosphate (DMAPP). Acts in the terminal step of the DOXP/MEP pathway for isoprenoid precursor biosynthesis. In Pseudomonas fluorescens (strain ATCC BAA-477 / NRRL B-23932 / Pf-5), this protein is 4-hydroxy-3-methylbut-2-enyl diphosphate reductase.